A 305-amino-acid chain; its full sequence is Thioredoxin reductase (305 aa).

28 to 35 (LGIETSSQ) lines the FAD pocket. The cysteines at positions 129 and 132 are disulfide-linked. Position 272–281 (272–281 (DCCDWIYRQA)) interacts with FAD.

This sequence belongs to the class-II pyridine nucleotide-disulfide oxidoreductase family. Homodimer. The cofactor is FAD.

The protein localises to the cytoplasm. The catalysed reaction is [thioredoxin]-dithiol + NADP(+) = [thioredoxin]-disulfide + NADPH + H(+). The chain is Thioredoxin reductase (TRXB) from Spironucleus barkhanus.